The chain runs to 137 residues: Cofilin-1A (137 aa).

Residues Ser2 to Thr135 enclose the ADF-H domain.

It belongs to the actin-binding proteins ADF family.

The protein localises to the nucleus matrix. It is found in the cytoplasm. Its subcellular location is the cytoskeleton. Functionally, controls reversibly actin polymerization and depolymerization in a pH-sensitive manner. It has the ability to bind G- and F-actin in a 1:1 ratio of cofilin to actin. It is the major component of intranuclear and cytoplasmic actin rods. This Dictyostelium discoideum (Social amoeba) protein is Cofilin-1A (cofA).